Reading from the N-terminus, the 365-residue chain is Annexin B22 (365 aa).

Annexin repeat units lie at residues 34 to 105 (FSAS…QLIV), 106 to 185 (DTPY…SLVQ), 211 to 283 (ELAE…AVLR), and 287 to 358 (DRPS…VLMG). Ca(2+)-binding residues include Met-47, Gly-49, Gly-51, Thr-52, Glu-54, Asp-91, Met-119, Gly-121, Gly-123, Asp-126, Lys-169, Glu-171, Thr-172, Glu-177, Asp-273, Met-300, Gly-302, Leu-303, Gly-304, and Asp-344.

This sequence belongs to the annexin family. In terms of assembly, homodimer.

It is found in the tegument. The protein resides in the secreted. The protein localises to the extracellular exosome. Its subcellular location is the host cell. Its function is as follows. Involved in reproduction of the worm. Involved in host-parasite interaction. Delivered into the host cell by means of parasite exosomes. Binds to acidic phospholipid membranes in a calcium-dependent manner in vitro. Causes aggregation of liposomes in the presence of calcium, but not in its absence. Likely to promote membrane fusion. May provide structural integrity within the tegument. In Schistosoma mansoni (Blood fluke), this protein is Annexin B22.